We begin with the raw amino-acid sequence, 176 residues long: Peptidyl-prolyl cis-trans isomerase cyp6 (176 aa).

The region spanning 10-173 is the PPIase cyclophilin-type domain; it reads FFDIAVNGQH…AKIEITDCGE (164 aa).

It belongs to the cyclophilin-type PPIase family.

It carries out the reaction [protein]-peptidylproline (omega=180) = [protein]-peptidylproline (omega=0). Functionally, PPIases accelerate the folding of proteins. It catalyzes the cis-trans isomerization of proline imidic peptide bonds in oligopeptides. This chain is Peptidyl-prolyl cis-trans isomerase cyp6 (cyp6), found in Rhizopus delemar (strain RA 99-880 / ATCC MYA-4621 / FGSC 9543 / NRRL 43880) (Mucormycosis agent).